The chain runs to 445 residues: tRNA modification GTPase MnmE (445 aa).

3 residues coordinate (6S)-5-formyl-5,6,7,8-tetrahydrofolate: Arg20, Glu79, and Lys119. Residues 215–371 (GLKLAIIGPP…ILKNIEEIAE (157 aa)) form the TrmE-type G domain. Asn225 contributes to the K(+) binding site. Residues 225–230 (NAGKSS), 244–250 (SNIAGTT), and 269–272 (DTAG) contribute to the GTP site. Ser229 is a Mg(2+) binding site. Residues Ser244, Ile246, and Thr249 each contribute to the K(+) site. Residue Thr250 participates in Mg(2+) binding. Lys445 contributes to the (6S)-5-formyl-5,6,7,8-tetrahydrofolate binding site.

The protein belongs to the TRAFAC class TrmE-Era-EngA-EngB-Septin-like GTPase superfamily. TrmE GTPase family. Homodimer. Heterotetramer of two MnmE and two MnmG subunits. Requires K(+) as cofactor.

It is found in the cytoplasm. Functionally, exhibits a very high intrinsic GTPase hydrolysis rate. Involved in the addition of a carboxymethylaminomethyl (cmnm) group at the wobble position (U34) of certain tRNAs, forming tRNA-cmnm(5)s(2)U34. This Rickettsia bellii (strain RML369-C) protein is tRNA modification GTPase MnmE.